The sequence spans 259 residues: Cell division protein FtsQ (259 aa).

At 1–15 (MTRDQTATFGRHALR) the chain is on the cytoplasmic side. The chain crosses the membrane as a helical span at residues 16-36 (VAGSGLLVAGVVALGLLGWQW). Over 37-259 (RANVTVDRVA…VVTRTRPLDG (223 aa)) the chain is Periplasmic. The region spanning 40 to 109 (VTVDRVAVTG…GALTISVTER (70 aa)) is the POTRA domain.

The protein belongs to the FtsQ/DivIB family. FtsQ subfamily.

It localises to the cell inner membrane. Its function is as follows. Essential cell division protein. The protein is Cell division protein FtsQ of Salinibacter ruber (strain DSM 13855 / M31).